The chain runs to 475 residues: Dihydrolipoyl dehydrogenase (475 aa).

FAD is bound by residues 36-45 (ERYSTLGGVC), Lys-54, and Gly-117. Cys-45 and Cys-50 form a disulfide bridge. Residues 182 to 186 (GGGII), Glu-205, Val-238, and 270 to 273 (AIGR) each bind NAD(+). 2 residues coordinate FAD: Asp-313 and Ala-321. His-445 (proton acceptor) is an active-site residue.

This sequence belongs to the class-I pyridine nucleotide-disulfide oxidoreductase family. The cofactor is FAD.

Its subcellular location is the cytoplasm. It carries out the reaction N(6)-[(R)-dihydrolipoyl]-L-lysyl-[protein] + NAD(+) = N(6)-[(R)-lipoyl]-L-lysyl-[protein] + NADH + H(+). In terms of biological role, the branched-chain alpha-keto dehydrogenase complex catalyzes the overall conversion of alpha-keto acids to acyl-CoA and CO(2). It contains multiple copies of 3 enzymatic components: branched-chain alpha-keto acid decarboxylase (E1), lipoamide acyltransferase (E2) and lipoamide dehydrogenase (E3). The sequence is that of Dihydrolipoyl dehydrogenase (lpd) from Vibrio parahaemolyticus serotype O3:K6 (strain RIMD 2210633).